A 462-amino-acid polypeptide reads, in one-letter code: L-seryl-tRNA(Sec) selenium transferase (462 aa).

K295 bears the N6-(pyridoxal phosphate)lysine mark.

Belongs to the SelA family. In terms of assembly, homodecamer; pentamer of dimers. Binds only one seryl-tRNA(Sec) per dimer. Pyridoxal 5'-phosphate serves as cofactor.

Its subcellular location is the cytoplasm. It catalyses the reaction L-seryl-tRNA(Sec) + selenophosphate + H(+) = L-selenocysteinyl-tRNA(Sec) + phosphate. It participates in aminoacyl-tRNA biosynthesis; selenocysteinyl-tRNA(Sec) biosynthesis; selenocysteinyl-tRNA(Sec) from L-seryl-tRNA(Sec) (bacterial route): step 1/1. Converts seryl-tRNA(Sec) to selenocysteinyl-tRNA(Sec) required for selenoprotein biosynthesis. The sequence is that of L-seryl-tRNA(Sec) selenium transferase from Klebsiella pneumoniae subsp. pneumoniae (strain ATCC 700721 / MGH 78578).